The sequence spans 278 residues: Large ribosomal subunit protein uL2 (278 aa).

Disordered stretches follow at residues 1-20, 25-58, and 223-278; these read MGIR…SVSD, TRST…GGGH, and GVVM…GKKR. The segment covering 37-58 has biased composition (basic residues); it reads LHGKGGRNAHGRITTRHKGGGH. Positions 253-268 are enriched in basic and acidic residues; that stretch reads PEGRTRKPNKPSDKLI. The segment covering 269 to 278 has biased composition (basic residues); it reads VRRRRTGKKR.

This sequence belongs to the universal ribosomal protein uL2 family. Part of the 50S ribosomal subunit. Forms a bridge to the 30S subunit in the 70S ribosome.

Its function is as follows. One of the primary rRNA binding proteins. Required for association of the 30S and 50S subunits to form the 70S ribosome, for tRNA binding and peptide bond formation. It has been suggested to have peptidyltransferase activity; this is somewhat controversial. Makes several contacts with the 16S rRNA in the 70S ribosome. The protein is Large ribosomal subunit protein uL2 of Mycolicibacterium smegmatis (strain ATCC 700084 / mc(2)155) (Mycobacterium smegmatis).